A 357-amino-acid chain; its full sequence is Probable butyrate kinase 1 (357 aa).

Belongs to the acetokinase family.

Its subcellular location is the cytoplasm. The enzyme catalyses butanoate + ATP = butanoyl phosphate + ADP. This Thermotoga maritima (strain ATCC 43589 / DSM 3109 / JCM 10099 / NBRC 100826 / MSB8) protein is Probable butyrate kinase 1.